Consider the following 257-residue polypeptide: 3-methyl-2-oxobutanoate hydroxymethyltransferase (257 aa).

Residues Asp42 and Asp81 each coordinate Mg(2+). Residues 42-43 (DS), Asp81, and Lys110 contribute to the 3-methyl-2-oxobutanoate site. Glu112 lines the Mg(2+) pocket. Glu176 serves as the catalytic Proton acceptor.

It belongs to the PanB family. In terms of assembly, homodecamer; pentamer of dimers. Requires Mg(2+) as cofactor.

It localises to the cytoplasm. It catalyses the reaction 3-methyl-2-oxobutanoate + (6R)-5,10-methylene-5,6,7,8-tetrahydrofolate + H2O = 2-dehydropantoate + (6S)-5,6,7,8-tetrahydrofolate. The protein operates within cofactor biosynthesis; (R)-pantothenate biosynthesis; (R)-pantoate from 3-methyl-2-oxobutanoate: step 1/2. Its function is as follows. Catalyzes the reversible reaction in which hydroxymethyl group from 5,10-methylenetetrahydrofolate is transferred onto alpha-ketoisovalerate to form ketopantoate. This chain is 3-methyl-2-oxobutanoate hydroxymethyltransferase, found in Pelagibacter ubique (strain HTCC1062).